The sequence spans 72 residues: DNA-directed RNA polymerase subunit omega (72 aa).

Belongs to the RNA polymerase subunit omega family. The RNAP catalytic core consists of 2 alpha, 1 beta, 1 beta' and 1 omega subunit. When a sigma factor is associated with the core the holoenzyme is formed, which can initiate transcription.

The enzyme catalyses RNA(n) + a ribonucleoside 5'-triphosphate = RNA(n+1) + diphosphate. Promotes RNA polymerase assembly. Latches the N- and C-terminal regions of the beta' subunit thereby facilitating its interaction with the beta and alpha subunits. The protein is DNA-directed RNA polymerase subunit omega of Clostridium acetobutylicum (strain ATCC 824 / DSM 792 / JCM 1419 / IAM 19013 / LMG 5710 / NBRC 13948 / NRRL B-527 / VKM B-1787 / 2291 / W).